The chain runs to 374 residues: MKFELDTTDGRARRGRLIFDRGTVETPAFMPVGTYGTVKGMTPEEVRATGADILLGNTFHLWLRPGEEIMRKHGDLHDFMNWQRPILTDSGGFQVFSLGDIRKITEEGVHFRSPINGEKIFLDPEKSMQIQDALGSDVVMIFDECTPYPATEDEARKSMQMSLRWAKRSRDEFDRLKNPNSLFGIIQGGVYEDLRDESLKGLVEIGFDGYAVGGLAVGEPKADMHRILEHICPQIPADKPRYLMGVGKPEDLVEGVRRGVDMFDCVMPTRNARNGHLFTSEGVIKIRNARHRDDTSPLDTKCDCYTCKNYSRAYLYHLDRCNEILGARLNTIHNLRYYQMLMEGLRGAIETGTLDAFVADFYTSQGREVPELVD.

Residue aspartate 89 is the Proton acceptor of the active site. Residues 89-93 (DSGGF), aspartate 143, glutamine 187, and glycine 214 contribute to the substrate site. The RNA binding stretch occupies residues 245–251 (GVGKPED). The active-site Nucleophile is aspartate 264. The interval 269-273 (TRNAR) is RNA binding; important for wobble base 34 recognition. Zn(2+) contacts are provided by cysteine 302, cysteine 304, cysteine 307, and histidine 333.

It belongs to the queuine tRNA-ribosyltransferase family. As to quaternary structure, homodimer. Within each dimer, one monomer is responsible for RNA recognition and catalysis, while the other monomer binds to the replacement base PreQ1. The cofactor is Zn(2+).

It carries out the reaction 7-aminomethyl-7-carbaguanine + guanosine(34) in tRNA = 7-aminomethyl-7-carbaguanosine(34) in tRNA + guanine. The protein operates within tRNA modification; tRNA-queuosine biosynthesis. In terms of biological role, catalyzes the base-exchange of a guanine (G) residue with the queuine precursor 7-aminomethyl-7-deazaguanine (PreQ1) at position 34 (anticodon wobble position) in tRNAs with GU(N) anticodons (tRNA-Asp, -Asn, -His and -Tyr). Catalysis occurs through a double-displacement mechanism. The nucleophile active site attacks the C1' of nucleotide 34 to detach the guanine base from the RNA, forming a covalent enzyme-RNA intermediate. The proton acceptor active site deprotonates the incoming PreQ1, allowing a nucleophilic attack on the C1' of the ribose to form the product. After dissociation, two additional enzymatic reactions on the tRNA convert PreQ1 to queuine (Q), resulting in the hypermodified nucleoside queuosine (7-(((4,5-cis-dihydroxy-2-cyclopenten-1-yl)amino)methyl)-7-deazaguanosine). The chain is Queuine tRNA-ribosyltransferase from Shewanella sp. (strain W3-18-1).